A 635-amino-acid polypeptide reads, in one-letter code: Ligand-gated ion channel 4 (635 aa).

The N-terminal stretch at 1–24 (MIICYSCLTVSILLTIKFVPCRFA) is a signal peptide. Topologically, residues 25–324 (GIEHQNTKSR…IHMHRRPLFY (300 aa)) are extracellular. Residues N46, N139, N177, and N225 are each glycosylated (N-linked (GlcNAc...) asparagine). Cysteines 238 and 252 form a disulfide. N282 carries N-linked (GlcNAc...) asparagine glycosylation. The next 3 helical transmembrane spans lie at 325 to 345 (VFNH…GFLM), 355 to 375 (MIIT…ESIP), and 381 to 401 (VPLI…ATCV). Over 402-599 (NVITLNMHRN…QQLASVVDRL (198 aa)) the chain is Cytoplasmic. A helical membrane pass occupies residues 600–620 (LLCLFCTATLFTIICLLIVPV). N-linked (GlcNAc...) asparagine glycosylation occurs at N625.

The protein belongs to the ligand-gated ion channel (TC 1.A.9) family.

It is found in the postsynaptic cell membrane. It localises to the cell membrane. Its function is as follows. Possible acetylcholine receptor. The protein is Ligand-gated ion channel 4 (lgc-4) of Caenorhabditis elegans.